The sequence spans 833 residues: Urease (833 aa).

Residues 395 to 833 (GALDVHVHYI…LPLTKRYFVY (439 aa)) enclose the Urease domain. Ni(2+) contacts are provided by H400 and H402. Positions 402 and 433 each coordinate urea. Position 483 (K483) interacts with Ni(2+). N6-carboxylysine is present on K483. Residues H485 and H512 each contribute to the urea site. Ni(2+)-binding residues include H512 and H538. H586 acts as the Proton donor in catalysis. D626 provides a ligand contact to Ni(2+). Residue A629 participates in urea binding.

The protein in the C-terminal section; belongs to the metallo-dependent hydrolases superfamily. Urease alpha subunit family. In terms of assembly, homohexamer. Ni(2+) serves as cofactor. In terms of processing, carboxylation allows a single lysine to coordinate two nickel ions.

The catalysed reaction is urea + 2 H2O + H(+) = hydrogencarbonate + 2 NH4(+). It participates in nitrogen metabolism; urea degradation; CO(2) and NH(3) from urea (urease route): step 1/1. With respect to regulation, the urease accessory proteins URE4, URE6 and URE7 are required for urease activity, URE7 supplying nickel for the functional urease. Its function is as follows. Plays a nutritional role via nitrogen acquisition in the environment. Contributes to the central nervous system invasion by enhancing yeast sequestration within microcapillary beds (such as within the brain) during hematogenous spread, thereby facilitating blood-to-brain invasion by C.neoformans. Affects fitness within the mammalian phagosome, promoting non-lytic exocytosis while delaying intracellular replication and thus reducing phagolysosomal membrane damage, events that could facilitate cryptococcal dissemination when transported inside macrophages. Urease activity is also associated with the regulation of key intracellular metabolic pathways, including melanin biosynthesis, polyamine biosynthesis, as well as intracellular levels of proline and reactive oxygen species. The sequence is that of Urease from Cryptococcus neoformans var. neoformans serotype D (strain B-3501A) (Filobasidiella neoformans).